A 227-amino-acid chain; its full sequence is ATP synthase subunit a (227 aa).

Helical transmembrane passes span 16 to 36 (AFVY…VAYI), 79 to 99 (LVAT…IPGF), 105 to 125 (SLNL…FEGI), 176 to 196 (LFLL…AFAL), and 202 to 222 (VLQT…AVAI).

The protein belongs to the ATPase A chain family. As to quaternary structure, F-type ATPases have 2 components, CF(1) - the catalytic core - and CF(0) - the membrane proton channel. CF(1) has five subunits: alpha(3), beta(3), gamma(1), delta(1), epsilon(1). CF(0) has three main subunits: a(1), b(2) and c(9-12). The alpha and beta chains form an alternating ring which encloses part of the gamma chain. CF(1) is attached to CF(0) by a central stalk formed by the gamma and epsilon chains, while a peripheral stalk is formed by the delta and b chains.

Its subcellular location is the cell inner membrane. Functionally, key component of the proton channel; it plays a direct role in the translocation of protons across the membrane. The protein is ATP synthase subunit a of Campylobacter concisus (strain 13826).